The primary structure comprises 59 residues: Large ribosomal subunit protein bL32 (59 aa).

A disordered region spans residues 1 to 59 (MAVQQNRKSRSRRGMRRSHDALSSAALSIDPTTGEKHRRHHVTPDGFYRGKKVVEVSQD). The span at 7-16 (RKSRSRRGMR) shows a compositional bias: basic residues.

Belongs to the bacterial ribosomal protein bL32 family.

This Hahella chejuensis (strain KCTC 2396) protein is Large ribosomal subunit protein bL32.